We begin with the raw amino-acid sequence, 125 residues long: NADPH-dependent 7-cyano-7-deazaguanine reductase (125 aa).

Catalysis depends on cysteine 41, which acts as the Thioimide intermediate. Aspartate 48 acts as the Proton donor in catalysis. Residues 63–65 (IEL) and 82–83 (HE) contribute to the substrate site.

This sequence belongs to the GTP cyclohydrolase I family. QueF type 1 subfamily.

It localises to the cytoplasm. The catalysed reaction is 7-aminomethyl-7-carbaguanine + 2 NADP(+) = 7-cyano-7-deazaguanine + 2 NADPH + 3 H(+). Its pathway is tRNA modification; tRNA-queuosine biosynthesis. Catalyzes the NADPH-dependent reduction of 7-cyano-7-deazaguanine (preQ0) to 7-aminomethyl-7-deazaguanine (preQ1). In Sulfurovum sp. (strain NBC37-1), this protein is NADPH-dependent 7-cyano-7-deazaguanine reductase.